Consider the following 371-residue polypeptide: Protein RecA (371 aa).

Residue 75 to 82 (GPESSGKT) coordinates ATP. Residues 343–371 (KAKDEPIADEDQPIDVVPNFDDQDVEPQN) form a disordered region.

Belongs to the RecA family.

The protein resides in the cytoplasm. Its function is as follows. Can catalyze the hydrolysis of ATP in the presence of single-stranded DNA, the ATP-dependent uptake of single-stranded DNA by duplex DNA, and the ATP-dependent hybridization of homologous single-stranded DNAs. It interacts with LexA causing its activation and leading to its autocatalytic cleavage. The protein is Protein RecA of Corynebacterium urealyticum (strain ATCC 43042 / DSM 7109).